A 294-amino-acid polypeptide reads, in one-letter code: Lipoyl synthase (294 aa).

Positions 35, 40, 46, 61, 65, 68, and 275 each coordinate [4Fe-4S] cluster. The region spanning 46-264 (CWGGGTATVM…REAGLGLGFR (219 aa)) is the Radical SAM core domain.

The protein belongs to the radical SAM superfamily. Lipoyl synthase family. It depends on [4Fe-4S] cluster as a cofactor.

It is found in the cytoplasm. It carries out the reaction [[Fe-S] cluster scaffold protein carrying a second [4Fe-4S](2+) cluster] + N(6)-octanoyl-L-lysyl-[protein] + 2 oxidized [2Fe-2S]-[ferredoxin] + 2 S-adenosyl-L-methionine + 4 H(+) = [[Fe-S] cluster scaffold protein] + N(6)-[(R)-dihydrolipoyl]-L-lysyl-[protein] + 4 Fe(3+) + 2 hydrogen sulfide + 2 5'-deoxyadenosine + 2 L-methionine + 2 reduced [2Fe-2S]-[ferredoxin]. Its pathway is protein modification; protein lipoylation via endogenous pathway; protein N(6)-(lipoyl)lysine from octanoyl-[acyl-carrier-protein]: step 2/2. Its function is as follows. Catalyzes the radical-mediated insertion of two sulfur atoms into the C-6 and C-8 positions of the octanoyl moiety bound to the lipoyl domains of lipoate-dependent enzymes, thereby converting the octanoylated domains into lipoylated derivatives. This Anaeromyxobacter sp. (strain Fw109-5) protein is Lipoyl synthase.